We begin with the raw amino-acid sequence, 246 residues long: Protein 3F (246 aa).

The first 19 residues, 1–19 (MKLLSKLILTLALATYASA), serve as a signal peptide directing secretion. N52 carries an N-linked (GlcNAc...) asparagine glycan. A compositionally biased stretch (basic and acidic residues) spans 113 to 124 (EVRPIDRLKDNA). A disordered region spans residues 113 to 223 (EVRPIDRLKD…EEAEHVEKGA (111 aa)). Over residues 126-145 (AANTENAQKSPNTQSTQKGS) the composition is skewed to polar residues. 3 tandem repeats follow at residues 145 to 153 (SPKSDAKEA), 154 to 162 (SPKTDAKEA), and 163 to 171 (SPKSDAKEA). A 3.5 X 9 AA tandem repeats of S-P-K-[ST]-D-A-K-E-A region spans residues 145–176 (SPKSDAKEASPKTDAKEASPKSDAKEASPKTD). Positions 146–177 (PKSDAKEASPKTDAKEASPKSDAKEASPKTDT) are enriched in basic and acidic residues. A 4; truncated repeat occupies 172-176 (SPKTD). Low complexity predominate over residues 181–213 (SSPKTDTKSSTQKPSSSSDSSKAKAEANTAANN).

The protein is Protein 3F (pspG) of Dictyostelium discoideum (Social amoeba).